The chain runs to 732 residues: Serine/threonine-protein kinase CBK1 (732 aa).

The segment at 111–240 (SFDNHLNVDP…STEAANSDMT (130 aa)) is disordered. Polar residues predominate over residues 119-159 (DPNNTERFTSMDSMNFQPPASTFTQLGNGSSTNLSEISSGQ). Residues 160 to 171 (NSLLSNHSVNNL) are compositionally biased toward low complexity. Positions 172-183 (PTALTSDTSPPV) are enriched in polar residues. The segment covering 185–221 (QHPQFQPQQQQQQQQPQQQQIFQQQQQQQQQQQQPQQ) has biased composition (low complexity). Residues 222-240 (SRAVVNQSVSTEAANSDMT) are compositionally biased toward polar residues. Residues 281–310 (HAIERNQRRLELENKIANEDIGSSEERKNR) are a coiled coil. Residues 335-647 (FHTVKVIGKG…AEEIKQHPFF (313 aa)) form the Protein kinase domain. ATP-binding positions include 341–349 (IGKGAFGEV) and lysine 364. The active-site Proton acceptor is aspartate 458. The AGC-kinase C-terminal domain occupies 648–730 (RGVDWDSIRD…SRFDYLTRKN (83 aa)).

It belongs to the protein kinase superfamily. STE Ser/Thr protein kinase family. COT1 subfamily. As to quaternary structure, interacts with MOB2 and BCR1.

The protein resides in the bud neck. Its subcellular location is the cell tip. The enzyme catalyses L-seryl-[protein] + ATP = O-phospho-L-seryl-[protein] + ADP + H(+). It carries out the reaction L-threonyl-[protein] + ATP = O-phospho-L-threonyl-[protein] + ADP + H(+). In terms of biological role, serine/threonine-protein kinase required for wild-type hyphal growth and transcriptional regulation of cell-wall-associated genes. Involved in the biofilm formation through phosphorylation of the master regulator of biofilm formation BCR1. This chain is Serine/threonine-protein kinase CBK1 (CBK1), found in Candida albicans (strain SC5314 / ATCC MYA-2876) (Yeast).